The chain runs to 143 residues: Large ribosomal subunit protein uL11 (143 aa).

Belongs to the universal ribosomal protein uL11 family. Part of the ribosomal stalk of the 50S ribosomal subunit. Interacts with L10 and the large rRNA to form the base of the stalk. L10 forms an elongated spine to which L12 dimers bind in a sequential fashion forming a multimeric L10(L12)X complex. Post-translationally, one or more lysine residues are methylated.

In terms of biological role, forms part of the ribosomal stalk which helps the ribosome interact with GTP-bound translation factors. The protein is Large ribosomal subunit protein uL11 of Leptothrix cholodnii (strain ATCC 51168 / LMG 8142 / SP-6) (Leptothrix discophora (strain SP-6)).